We begin with the raw amino-acid sequence, 362 residues long: Protein RecA (362 aa).

Gly67 to Thr74 contacts ATP. Residues Val337 to Ala356 are compositionally biased toward low complexity. The interval Val337–Ala362 is disordered.

Belongs to the RecA family.

The protein localises to the cytoplasm. Its function is as follows. Can catalyze the hydrolysis of ATP in the presence of single-stranded DNA, the ATP-dependent uptake of single-stranded DNA by duplex DNA, and the ATP-dependent hybridization of homologous single-stranded DNAs. It interacts with LexA causing its activation and leading to its autocatalytic cleavage. This is Protein RecA from Clavibacter michiganensis subsp. michiganensis (strain NCPPB 382).